An 858-amino-acid chain; its full sequence is Chitin synthase 2 (858 aa).

A compositionally biased stretch (basic and acidic residues) spans 1 to 12; it reads MYPEGPKPEHDQ. The tract at residues 1–116 is disordered; that stretch reads MYPEGPKPEH…GQAPRRQPRR (116 aa). Positions 15–24 are enriched in polar residues; sequence LQDTQFSNQP. Composition is skewed to pro residues over residues 52–68 and 76–89; these read AYPP…PNFP and PYPP…PVSP. 7 helical membrane-spanning segments follow: residues 500–517, 540–560, 586–606, 621–641, 665–685, 799–819, and 825–845; these read RWLN…YHWR, TYNL…FFIL, LHTV…IMAL, MVFF…ITVV, NIII…FMFL, VLAW…TTVI, and ASIY…IRFT.

Belongs to the chitin synthase family.

Its subcellular location is the cell membrane. It catalyses the reaction [(1-&gt;4)-N-acetyl-beta-D-glucosaminyl](n) + UDP-N-acetyl-alpha-D-glucosamine = [(1-&gt;4)-N-acetyl-beta-D-glucosaminyl](n+1) + UDP + H(+). Functionally, polymerizes chitin, a structural polymer of the cell wall and septum, by transferring the sugar moiety of UDP-GlcNAc to the non-reducing end of the growing chitin polymer. The polypeptide is Chitin synthase 2 (CHS2) (Rhizopus oligosporus (Rhizopus microsporus var. oligosporus)).